The chain runs to 743 residues: Neutral ceramidase (743 aa).

Residues 1-14 (MASKSRRLSGLEIS) lie on the Cytoplasmic side of the membrane. A helical; Signal-anchor for type II membrane protein membrane pass occupies residues 15–35 (LIVLFLLMTAVSVALITVLAL). The Lumenal portion of the chain corresponds to 36–743 (KQESDKKEEV…FKVARSFYYF (708 aa)). A disordered region spans residues 40–60 (DKKEEVTPEEPSPSVTPPEKP). A compositionally biased stretch (pro residues) spans 49 to 59 (EPSPSVTPPEK). Zn(2+)-binding residues include His-151 and His-260. An N-linked (GlcNAc...) asparagine glycan is attached at Asn-265. Catalysis depends on Ser-312, which acts as the Nucleophile. Intrachain disulfides connect Cys-320–Cys-334 and Cys-327–Cys-342. Residues Asn-331, Asn-389, Asn-398, and Asn-451 are each glycosylated (N-linked (GlcNAc...) asparagine). A disulfide bridge connects residues Cys-406 and Cys-456. Zn(2+) contacts are provided by Glu-498 and Tyr-538. A glycan (N-linked (GlcNAc...) asparagine) is linked at Asn-661. Residues Asp-672, Ser-674, and Thr-677 each coordinate Ca(2+). The N-linked (GlcNAc...) asparagine glycan is linked to Asn-720.

This sequence belongs to the neutral ceramidase family. It depends on Zn(2+) as a cofactor. N-glycosylated. In terms of processing, O-glycosylated. As to expression, detected in intestine (at protein level).

It is found in the cell membrane. The protein localises to the membrane raft. Its subcellular location is the membrane. It localises to the caveola. The protein resides in the golgi apparatus membrane. It is found in the mitochondrion. The protein localises to the secreted. Its subcellular location is the extracellular exosome. It catalyses the reaction an N-acylsphing-4-enine + H2O = sphing-4-enine + a fatty acid. The enzyme catalyses N-dodecanoylsphing-4-enine + H2O = dodecanoate + sphing-4-enine. Its pathway is lipid metabolism; sphingolipid metabolism. Its function is as follows. Plasma membrane ceramidase that hydrolyzes sphingolipid ceramides into sphingosine and free fatty acids at neutral pH. Ceramides, sphingosine, and its phosphorylated form sphingosine-1-phosphate are bioactive lipids that mediate cellular signaling pathways regulating several biological processes including cell proliferation, apoptosis and differentiation. Also catalyzes the reverse reaction allowing the synthesis of ceramides from fatty acids and sphingosine. Together with sphingomyelinase, participates in the production of sphingosine and sphingosine-1-phosphate from the degradation of sphingomyelin, a sphingolipid enriched in the plasma membrane of cells. Also participates in the hydrolysis of ceramides from the extracellular milieu allowing the production of sphingosine-1-phosphate inside and outside cells. In Danio rerio (Zebrafish), this protein is Neutral ceramidase (asah2).